A 292-amino-acid chain; its full sequence is MKNHFKCIGIVGHPRHPTALTTHEMLWRWLCSKGYEVLVEQQIAHELQLSNVKTGTLAEIGQQADLAVVVGGDGNMLGAARTLARYDINVIGINRGNLGFLTDLDPDNALQQLADVLEGHYIAEKRFLLEAQVCQQDCQKRISTAINEVVLHPGKVAHMIEFEVYIDEVFAFSQRSDGLIISTPTGSTAYSLSAGGPILTPSLDAITLVPMFPHTLSARPLVINGDSTIRLRFSHRCSDLEISCDSQIALPIQDGEDVLIRRCDYHLNLIHPKDYSYFNTLSTKLGWSKKLF.

The active-site Proton acceptor is the aspartate 73. Residues 73 to 74 (DG), 147 to 148 (NE), histidine 158, arginine 175, aspartate 177, 188 to 193 (TAYSLS), and glutamine 247 each bind NAD(+).

Belongs to the NAD kinase family. A divalent metal cation is required as a cofactor.

It localises to the cytoplasm. It catalyses the reaction NAD(+) + ATP = ADP + NADP(+) + H(+). In terms of biological role, involved in the regulation of the intracellular balance of NAD and NADP, and is a key enzyme in the biosynthesis of NADP. Catalyzes specifically the phosphorylation on 2'-hydroxyl of the adenosine moiety of NAD to yield NADP. This chain is NAD kinase, found in Klebsiella pneumoniae subsp. pneumoniae (strain ATCC 700721 / MGH 78578).